A 515-amino-acid chain; its full sequence is Putative cytochrome P450 CYP13A2 (515 aa).

Residue Cys460 participates in heme binding.

It belongs to the cytochrome P450 family. Heme is required as a cofactor.

Its function is as follows. Cytochromes P450 are a group of heme-thiolate monooxygenases. They oxidize a variety of structurally unrelated compounds, including steroids, fatty acids, and xenobiotics. The sequence is that of Putative cytochrome P450 CYP13A2 (cyp-13A2) from Caenorhabditis elegans.